We begin with the raw amino-acid sequence, 445 residues long: uncharacterized protein (445 aa).

Helical transmembrane passes span 16–36, 52–72, 98–118, 168–188, 219–239, 243–263, 283–303, and 366–386; these read IVSL…AFLI, LLAS…GYLL, VHSL…AGGC, GLMF…LGIV, ASAL…VWLI, GWSV…GALG, LIAA…NEGS, and AAYP…VPLV. The segment at 417 to 445 is disordered; the sequence is AWPNGPRRPGPPGQPRRVRQGGTAITPPT.

It belongs to the major facilitator superfamily.

It is found in the cell membrane. This is an uncharacterized protein from Mycobacterium tuberculosis (strain ATCC 25618 / H37Rv).